The primary structure comprises 70 residues: Guanine nucleotide-binding protein subunit gamma-1 (70 aa).

Cysteine 67 bears the Cysteine methyl ester mark. Residue cysteine 67 is the site of S-geranylgeranyl cysteine attachment. Positions 68–70 (TVL) are cleaved as a propeptide — removed in mature form.

This sequence belongs to the G protein gamma family. In terms of assembly, g proteins are composed of 3 units, alpha, beta and gamma. As to expression, predominantly expressed in the central nervous system.

The protein localises to the cell membrane. Its function is as follows. Guanine nucleotide-binding proteins (G proteins) are involved as a modulator or transducer in various transmembrane signaling systems. The beta and gamma chains are required for the GTPase activity, for replacement of GDP by GTP, and for G protein-effector interaction. This is Guanine nucleotide-binding protein subunit gamma-1 (Ggamma1) from Drosophila melanogaster (Fruit fly).